Reading from the N-terminus, the 699-residue chain is Elongation factor G (699 aa).

The tr-type G domain maps to 8–288; that stretch reads EDYRNFGIMA…AVVDYLPSPV (281 aa). GTP-binding positions include 17–24, 86–90, and 140–143; these read AHIDAGKT, DTPGH, and NKMD.

It belongs to the TRAFAC class translation factor GTPase superfamily. Classic translation factor GTPase family. EF-G/EF-2 subfamily.

It localises to the cytoplasm. Catalyzes the GTP-dependent ribosomal translocation step during translation elongation. During this step, the ribosome changes from the pre-translocational (PRE) to the post-translocational (POST) state as the newly formed A-site-bound peptidyl-tRNA and P-site-bound deacylated tRNA move to the P and E sites, respectively. Catalyzes the coordinated movement of the two tRNA molecules, the mRNA and conformational changes in the ribosome. The sequence is that of Elongation factor G from Sinorhizobium medicae (strain WSM419) (Ensifer medicae).